The following is a 337-amino-acid chain: Biotin synthase (337 aa).

A Radical SAM core domain is found at 58-288 (AGSELLHACS…AHPHKIIKFA (231 aa)). [4Fe-4S] cluster contacts are provided by C76, C80, and C83. [2Fe-2S] cluster is bound by residues C155, C216, and K286.

It belongs to the radical SAM superfamily. Biotin synthase family. Homodimer. [4Fe-4S] cluster serves as cofactor. It depends on [2Fe-2S] cluster as a cofactor.

The catalysed reaction is (4R,5S)-dethiobiotin + (sulfur carrier)-SH + 2 reduced [2Fe-2S]-[ferredoxin] + 2 S-adenosyl-L-methionine = (sulfur carrier)-H + biotin + 2 5'-deoxyadenosine + 2 L-methionine + 2 oxidized [2Fe-2S]-[ferredoxin]. Its pathway is cofactor biosynthesis; biotin biosynthesis; biotin from 7,8-diaminononanoate: step 2/2. In terms of biological role, catalyzes the conversion of dethiobiotin (DTB) to biotin by the insertion of a sulfur atom into dethiobiotin via a radical-based mechanism. This Pelodictyon phaeoclathratiforme (strain DSM 5477 / BU-1) protein is Biotin synthase.